A 259-amino-acid chain; its full sequence is Nodulation protein J (259 aa).

The 227-residue stretch at 30 to 256 (ASILGNLADP…LVSTALLRRR (227 aa)) folds into the ABC transmembrane type-2 domain. The next 6 helical transmembrane spans lie at 32-52 (ILGN…GLGV), 64-84 (AFLA…FETI), 116-136 (AWAA…AAML), 141-161 (WLAL…FASL), 174-194 (YFIF…GAVF), and 228-248 (IANV…PFLV).

This sequence belongs to the ABC-2 integral membrane protein family. Lipooligosaccharide exporter (TC 3.A.1.102) subfamily. In terms of assembly, the complex is composed of two ATP-binding proteins (NodI) and two transmembrane proteins (NodJ).

It is found in the cell inner membrane. Part of the ABC transporter complex NodIJ involved in the export of the nodulation factors (Nod factors), the bacterial signal molecules that induce symbiosis and subsequent nodulation induction. Nod factors are LCO (lipo-chitin oligosaccharide), a modified beta-1,4-linked N-acetylglucosamine oligosaccharide. This subunit encodes the transporter. The polypeptide is Nodulation protein J (nodJ) (Rhizobium leguminosarum bv. viciae).